We begin with the raw amino-acid sequence, 461 residues long: Asparagine--tRNA ligase (461 aa).

This sequence belongs to the class-II aminoacyl-tRNA synthetase family. As to quaternary structure, homodimer.

It localises to the cytoplasm. The enzyme catalyses tRNA(Asn) + L-asparagine + ATP = L-asparaginyl-tRNA(Asn) + AMP + diphosphate + H(+). This Nitratidesulfovibrio vulgaris (strain DP4) (Desulfovibrio vulgaris) protein is Asparagine--tRNA ligase.